A 320-amino-acid polypeptide reads, in one-letter code: Ferrochelatase (320 aa).

The Fe cation site is built by histidine 194 and glutamate 275.

The protein belongs to the ferrochelatase family. Monomer.

The protein resides in the cytoplasm. The catalysed reaction is heme b + 2 H(+) = protoporphyrin IX + Fe(2+). It participates in porphyrin-containing compound metabolism; protoheme biosynthesis; protoheme from protoporphyrin-IX: step 1/1. Catalyzes the ferrous insertion into protoporphyrin IX. The protein is Ferrochelatase of Escherichia coli O45:K1 (strain S88 / ExPEC).